The following is a 160-amino-acid chain: Putative UPF0479 protein YIL177W-A (160 aa).

Transmembrane regions (helical) follow at residues 39-59 (IVFC…KVLQ) and 136-156 (VPMI…ISQH).

Belongs to the UPF0479 family.

It is found in the membrane. The polypeptide is Putative UPF0479 protein YIL177W-A (Saccharomyces cerevisiae (strain ATCC 204508 / S288c) (Baker's yeast)).